Here is a 458-residue protein sequence, read N- to C-terminus: Phenylalanine-specific permease (458 aa).

Residues 1-27 (MKNASTVSEDTASNQEPTLHRGLHNRH) are Cytoplasmic-facing. A helical transmembrane segment spans residues 28-48 (IQLIALGGAIGTGLFLGIGPA). The Periplasmic portion of the chain corresponds to 49–50 (IQ). A helical transmembrane segment spans residues 51–71 (MAGPAVLLGYGVAGIIAFLIM). At 72–105 (RQLGEMVVEEPVSGSFAHFAYKYWGPFAGFLSGW) the chain is on the cytoplasmic side. A helical transmembrane segment spans residues 106-126 (NYWVMFVLVGMAELTAAGIYM). At 127-132 (QYWFPD) the chain is on the periplasmic side. The chain crosses the membrane as a helical span at residues 133-153 (VPTWIWAAAFFIIINAVNLVN). The Cytoplasmic portion of the chain corresponds to 154–160 (VRLYGET). Residues 161–181 (EFWFALIKVLAIIGMIGFGLW) traverse the membrane as a helical segment. At 182–196 (LLFSGHGGEKASIDN) the chain is on the periplasmic side. A helical transmembrane segment spans residues 197-217 (LWRYGGFFATGWNGLILSLAV). The Cytoplasmic portion of the chain corresponds to 218–250 (IMFSFGGLELIGITAAEARDPEKSIPKAVNQVV). Residues 251 to 271 (YRILLFYIGSLVVLLALYPWV) traverse the membrane as a helical segment. The Periplasmic segment spans residues 272-288 (EVKSNSSPFVMIFHNLD). A helical transmembrane segment spans residues 289–309 (SNVVASALNFVILVASLSVYN). At 310 to 341 (SGVYSNSRMLFGLSVQGNAPKFLTRVSRRGVP) the chain is on the cytoplasmic side. Residues 342-362 (INSLMLSGAITSLVVLINYLL) form a helical membrane-spanning segment. Residues 363 to 367 (PQKAF) are Periplasmic-facing. Residues 368-388 (GLLMALVVATLLLNWIMICLA) form a helical membrane-spanning segment. Residues 389–411 (HLRFRAAMRRQGRETQFKALLYP) are Cytoplasmic-facing. The helical transmembrane segment at 412–432 (FGNYLCIAFLGMILLLMCTMD) threads the bilayer. Residues 433 to 434 (DM) lie on the Periplasmic side of the membrane. Residues 435–455 (RLSAILLPVWIVFLFMAFKTL) form a helical membrane-spanning segment. At 456–458 (RRK) the chain is on the cytoplasmic side.

Belongs to the amino acid-polyamine-organocation (APC) superfamily. Amino acid transporter (AAT) (TC 2.A.3.1) family.

It is found in the cell inner membrane. The enzyme catalyses L-phenylalanine(in) + H(+)(in) = L-phenylalanine(out) + H(+)(out). Permease that is involved in the active transport across the cytoplasmic membrane of phenylalanine. Can also transport tyrosine, but not tryptophan. The sequence is that of Phenylalanine-specific permease from Escherichia coli (strain K12).